The primary structure comprises 192 residues: Cytochrome b-245 light chain (192 aa).

At 2 to 7 (GQIEWA) the chain is on the cytoplasmic side. A helical membrane pass occupies residues 8–30 (MWANEQALASGLILMTGGIVATA). The Extracellular segment spans residues 31 to 35 (GQFTQ). A helical membrane pass occupies residues 36–53 (WYLGTYSIAAGVLVCLLE). The Cytoplasmic portion of the chain corresponds to 54-69 (YPRGRRTKGSTMERCE). An intramembrane segment occupies 70-80 (QKYMTKVVKAF). At 81 to 86 (GPLSRN) the chain is on the cytoplasmic side. Residues 87–104 (YYIRAFLHLGLSVPAGFL) traverse the membrane as a helical segment. Position 105 (leucine 105) is a topological domain, extracellular. Residues 106–126 (ATILGTACLAIASGIYLLAAI) traverse the membrane as a helical segment. Residues 127 to 192 (RGEQWTPIEP…TPCPVTDEVV (66 aa)) lie on the Cytoplasmic side of the membrane. Residues 134–192 (IEPKPKERPQVGGTIKQPPSNPPPRPPPEARKKPGEEAVAGVPRGAPRKTPCPVTDEVV) are disordered. Position 147 is a phosphothreonine (threonine 147). A Glycyl lysine isopeptide (Lys-Gly) (interchain with G-Cter in ubiquitin) cross-link involves residue lysine 149.

The protein belongs to the p22phox family. Component of the phagocyte NADPH oxidase core complex/cytochrome b558 complex, composed of CYBB (heavy chain (beta)) and CYBA (light chain (alpha)). Component of the phagocyte NADPH oxidase complex composed of an obligatory core heterodimer formed by the membrane proteins CYBA and CYBB and the cytosolic regulatory subunits NCF1/p47-phox, NCF2/p67-phox, NCF4/p40-phox and the small GTPase RAC1 or RAC2. Interacts with NCF1 (via SH3 domain). Interacts with SH3PXD2A. Interacts with DUOX1, DUOX2 and TPO. Interacts with NOX4; this interaction mediates superoxide generation. Interacts with calprotectin (S100A8/9). Interacts with GBP7. Interacts with NOXO1. Forms a heterodimer with NOX3 and is essential for activity and cell membrane localization of NOX3. Interacts with NOX1. Post-translationally, phosphorylation at Thr-147 enhances NADPH oxidase activity by promoting NCF1/p47-phox binding. Ubiquitinated at Lys-149 likely by RNF145.

Its subcellular location is the cell membrane. Its function is as follows. Subunit of NADPH oxidase complexes that is required for the NADPH oxidase activity that generates, in various cell types, superoxide from molecular oxygen utilizing NADPH as an electron donor. Subunit of the phagocyte NADPH oxidase complex that mediates the transfer of electrons from cytosolic NADPH to O2 to produce the superoxide anion (O2(-)). In the activated complex, electrons are first transferred from NADPH to flavin adenine dinucleotide (FAD) and subsequently transferred via two heme molecules to molecular oxygen, producing superoxide through an outer-sphere reaction. Activation of the NADPH oxidase complex is initiated by the assembly of cytosolic subunits of the NADPH oxidase complex with the core NADPH oxidase complex to form a complex at the plasma membrane or phagosomal membrane. This activation process is initiated by phosphorylation dependent binding of the cytosolic NCF1/p47-phox subunit to the C-terminus of CYBA/p22-phox. Aassociates with NOX3 to form a functional NADPH oxidase constitutively generating superoxide. This chain is Cytochrome b-245 light chain, found in Sus scrofa (Pig).